The chain runs to 298 residues: Leucine-rich repeat-containing protein 38 (298 aa).

Residues 1–31 (MSLCVAPRHPTGAAAALGLGSLLVLLGPGRA) form the signal peptide. Intrachain disulfides connect C32/C38 and C36/C46. In terms of domain architecture, LRRNT spans 32–60 (CPAGCACTDPHTVDCRDRGLPSVPDPFPL). The Extracellular portion of the chain corresponds to 32 to 251 (CPAGCACTDP…ECKFSLSLTD (220 aa)). LRR repeat units follow at residues 61 to 82 (DVRKLLVAGNRIQQIPEDFFIF), 85 to 106 (DLVYLDFRNNSLRSLEEGTFSG), 109 to 130 (KLAFLDLSYNNLTQLGAGAFRS), 133 to 154 (RLVKLSLANNHLAGVHEAAFES), and 157 to 177 (SLQVLELNDNNLRSLNVAALD). A glycan (N-linked (GlcNAc...) asparagine) is linked at N119. Positions 190-245 (NPWLCDCDFAHLFSWIQENTSKLPKGLDAIQCSLPMEDRRVALRELSEASFSECKF) constitute an LRRCT domain. 2 cysteine pairs are disulfide-bonded: C194-C221 and C196-C243. Residues 252–272 (LFIIIFSGVAVSIAAIISSFF) traverse the membrane as a helical segment. The Cytoplasmic portion of the chain corresponds to 273-298 (LATVVQCFQRCAPNKDTEDEDDDEDD).

As to quaternary structure, interacts with KCNMA1.

The protein resides in the cell membrane. Its function is as follows. Auxiliary protein of the large-conductance, voltage and calcium-activated potassium channel (BK alpha). Modulates gating properties by producing a marked shift in the BK channel's voltage dependence of activation in the hyperpolarizing direction, and in the absence of calcium. The sequence is that of Leucine-rich repeat-containing protein 38 (Lrrc38) from Mus musculus (Mouse).